Consider the following 178-residue polypeptide: MTVEELKALIRTVPDFPAPGIQFRDITTLLAHGEGLAATMRHLGEAARLAGAEAIAGMEARGFIFGAGVAVELGLGFLPIRKPGKLPASTIGVDYDLEYGTDRLEIDPGAVEAGQKVVIVDDLIATGGTALAAAKLLRQAGAEVGQALFVIDLPELGGAQRLRDTGITVDSLMAFDGH.

The protein belongs to the purine/pyrimidine phosphoribosyltransferase family. In terms of assembly, homodimer.

It localises to the cytoplasm. The enzyme catalyses AMP + diphosphate = 5-phospho-alpha-D-ribose 1-diphosphate + adenine. It functions in the pathway purine metabolism; AMP biosynthesis via salvage pathway; AMP from adenine: step 1/1. Catalyzes a salvage reaction resulting in the formation of AMP, that is energically less costly than de novo synthesis. This chain is Adenine phosphoribosyltransferase, found in Erythrobacter litoralis (strain HTCC2594).